Here is a 337-residue protein sequence, read N- to C-terminus: Phosphate acyltransferase (337 aa).

This sequence belongs to the PlsX family. As to quaternary structure, homodimer. Probably interacts with PlsY.

Its subcellular location is the cytoplasm. It carries out the reaction a fatty acyl-[ACP] + phosphate = an acyl phosphate + holo-[ACP]. It participates in lipid metabolism; phospholipid metabolism. Functionally, catalyzes the reversible formation of acyl-phosphate (acyl-PO(4)) from acyl-[acyl-carrier-protein] (acyl-ACP). This enzyme utilizes acyl-ACP as fatty acyl donor, but not acyl-CoA. The polypeptide is Phosphate acyltransferase (Ehrlichia canis (strain Jake)).